The primary structure comprises 288 residues: Acetyl-coenzyme A carboxylase carboxyl transferase subunit beta, chloroplastic (288 aa).

In terms of domain architecture, CoA carboxyltransferase N-terminal spans 30 to 288 (LWIKCFDCGL…QILSLHNHSK (259 aa)). Zn(2+) contacts are provided by Cys34, Cys37, Cys53, and Cys56. A C4-type zinc finger spans residues 34–56 (CFDCGLLMYSKVLKRNLKVCPQC).

This sequence belongs to the AccD/PCCB family. As to quaternary structure, acetyl-CoA carboxylase is a heterohexamer composed of biotin carboxyl carrier protein, biotin carboxylase and 2 subunits each of ACCase subunit alpha and ACCase plastid-coded subunit beta (accD). Zn(2+) is required as a cofactor.

It localises to the plastid. The protein resides in the chloroplast stroma. The enzyme catalyses N(6)-carboxybiotinyl-L-lysyl-[protein] + acetyl-CoA = N(6)-biotinyl-L-lysyl-[protein] + malonyl-CoA. Its pathway is lipid metabolism; malonyl-CoA biosynthesis; malonyl-CoA from acetyl-CoA: step 1/1. Component of the acetyl coenzyme A carboxylase (ACC) complex. Biotin carboxylase (BC) catalyzes the carboxylation of biotin on its carrier protein (BCCP) and then the CO(2) group is transferred by the transcarboxylase to acetyl-CoA to form malonyl-CoA. This Pyropia yezoensis (Susabi-nori) protein is Acetyl-coenzyme A carboxylase carboxyl transferase subunit beta, chloroplastic.